The primary structure comprises 208 residues: Small ribosomal subunit protein uS4 (208 aa).

The tract at residues 30-49 (KSALEKRPYPPGQHGQRRSK) is disordered. One can recognise an S4 RNA-binding domain in the interval 98–161 (RRLDNVVYRM…KNNPQIQRSL (64 aa)).

Belongs to the universal ribosomal protein uS4 family. Part of the 30S ribosomal subunit. Contacts protein S5. The interaction surface between S4 and S5 is involved in control of translational fidelity.

Its function is as follows. One of the primary rRNA binding proteins, it binds directly to 16S rRNA where it nucleates assembly of the body of the 30S subunit. With S5 and S12 plays an important role in translational accuracy. The protein is Small ribosomal subunit protein uS4 of Nitratiruptor sp. (strain SB155-2).